The primary structure comprises 168 residues: Small ribosomal subunit protein uS5 (168 aa).

The S5 DRBM domain maps to 12-75 (YQEKLVSVTR…DQAKKNMVYI (64 aa)).

The protein belongs to the universal ribosomal protein uS5 family. In terms of assembly, part of the 30S ribosomal subunit. Contacts proteins S4 and S8.

In terms of biological role, with S4 and S12 plays an important role in translational accuracy. Its function is as follows. Located at the back of the 30S subunit body where it stabilizes the conformation of the head with respect to the body. The polypeptide is Small ribosomal subunit protein uS5 (Legionella pneumophila (strain Paris)).